A 394-amino-acid polypeptide reads, in one-letter code: 1-deoxy-D-xylulose 5-phosphate reductoisomerase (394 aa).

NADPH is bound by residues T12, G13, S14, I15, K39, Q40, and N126. K127 contacts 1-deoxy-D-xylulose 5-phosphate. E128 contacts NADPH. Residue D152 participates in Mn(2+) binding. The 1-deoxy-D-xylulose 5-phosphate site is built by S153, E154, S183, and H206. Residue E154 coordinates Mn(2+). Residue G212 participates in NADPH binding. The 1-deoxy-D-xylulose 5-phosphate site is built by S219, N224, K225, and E228. E228 provides a ligand contact to Mn(2+).

It belongs to the DXR family. It depends on Mg(2+) as a cofactor. Requires Mn(2+) as cofactor.

It catalyses the reaction 2-C-methyl-D-erythritol 4-phosphate + NADP(+) = 1-deoxy-D-xylulose 5-phosphate + NADPH + H(+). It participates in isoprenoid biosynthesis; isopentenyl diphosphate biosynthesis via DXP pathway; isopentenyl diphosphate from 1-deoxy-D-xylulose 5-phosphate: step 1/6. Its function is as follows. Catalyzes the NADPH-dependent rearrangement and reduction of 1-deoxy-D-xylulose-5-phosphate (DXP) to 2-C-methyl-D-erythritol 4-phosphate (MEP). The sequence is that of 1-deoxy-D-xylulose 5-phosphate reductoisomerase from Neisseria meningitidis serogroup B (strain ATCC BAA-335 / MC58).